Here is a 220-residue protein sequence, read N- to C-terminus: Deoxyribose-phosphate aldolase (220 aa).

Asp-89 functions as the Proton donor/acceptor in the catalytic mechanism. Lys-151 functions as the Schiff-base intermediate with acetaldehyde in the catalytic mechanism. Residue Lys-180 is the Proton donor/acceptor of the active site.

Belongs to the DeoC/FbaB aldolase family. DeoC type 1 subfamily.

The protein localises to the cytoplasm. The enzyme catalyses 2-deoxy-D-ribose 5-phosphate = D-glyceraldehyde 3-phosphate + acetaldehyde. The protein operates within carbohydrate degradation; 2-deoxy-D-ribose 1-phosphate degradation; D-glyceraldehyde 3-phosphate and acetaldehyde from 2-deoxy-alpha-D-ribose 1-phosphate: step 2/2. Catalyzes a reversible aldol reaction between acetaldehyde and D-glyceraldehyde 3-phosphate to generate 2-deoxy-D-ribose 5-phosphate. The chain is Deoxyribose-phosphate aldolase from Streptococcus pneumoniae serotype 2 (strain D39 / NCTC 7466).